The following is a 639-amino-acid chain: MEEVDRILIHSLRQAGTDIDEDVQSVKQFTSELIVEAVVRCLRVIDPAVGNGLSHSLPPGMSARFRLGMSLAQACQDVGFKGEIGYQTFLYSNEPEIRSLFMFLVERLPRESAEASDQPAGKSVLLQRAIAAQIKAQLSVPWLPPTCRLPVHRKTQSSGPCHSFHAQPLSLPCSLKVSSRKQPKEVQEYWRNYLLPVTAQPSQPASVPASLLENHISELSAAQEWESEWNSQGLLSRLTPEEYRSRKKARLQKRIEEQLRTAAQPRPDTHGATRSTSDLAELLQSFGGASTGGDVLTKGTRFTHTEKFTFTQEPEKAVQQMAAAASALPSSQQSEEDLKAQQEAELSALQQQLQQLSVQMEEVGGGIKQLTVSIQQVTDELQTREVTNAERENSVKIKRQTIDLLPDAENNLLKLQSLVESSSKRVVQLASQWEKHRVPLIDEHRRLKELCSNRESESSRKLSEIKDLHDKIRQSAEEAKKKESLYKQLLTEFETLSKDVSRSAYTIRILEIVGNIKKQKEEITKILSDTKDLQKEINGLTGKLDRTFAVTDELVFKDAKKDESVRKSYKYLAALHENCTQLIQTIEDTGTIMREIRDLEEQIETENGKRTVSNLEKILEDYKAIRQENSALAAKIREG.

Coiled-coil stretches lie at residues 331 to 370 (SQQSEEDLKAQQEAELSALQQQLQQLSVQMEEVGGGIKQL), 459 to 541 (SRKL…NGLT), and 591 to 638 (TIMR…KIRE).

Belongs to the CCDC22 family.

The protein resides in the endosome. It localises to the cytoplasm. Its subcellular location is the cytoskeleton. It is found in the microtubule organizing center. The protein localises to the centrosome. May be involved in regulation of NF-kappa-B signaling. May be involved in copper-dependent atp7a trafficking between the trans-Golgi network and vesicles in the cell periphery. The chain is Coiled-coil domain-containing protein 22 (ccdc22) from Danio rerio (Zebrafish).